The following is a 124-amino-acid chain: MIVGIGIDITEIDRIAKGWGRFGDRFARRILHPHEVVRMPAANPVAFLAGRFAVKEAAVKALGTGFSGGIGPRDIEVGVAPAGAPQLVLHGKAAARMEALGATRTHVSLTHGRDTAAAVVILES.

Mg(2+)-binding residues include Asp-8 and Glu-56.

It belongs to the P-Pant transferase superfamily. AcpS family. The cofactor is Mg(2+).

The protein resides in the cytoplasm. It carries out the reaction apo-[ACP] + CoA = holo-[ACP] + adenosine 3',5'-bisphosphate + H(+). Its function is as follows. Transfers the 4'-phosphopantetheine moiety from coenzyme A to a Ser of acyl-carrier-protein. The sequence is that of Holo-[acyl-carrier-protein] synthase from Nitratidesulfovibrio vulgaris (strain ATCC 29579 / DSM 644 / CCUG 34227 / NCIMB 8303 / VKM B-1760 / Hildenborough) (Desulfovibrio vulgaris).